Here is a 486-residue protein sequence, read N- to C-terminus: ATP-dependent 6-phosphofructokinase (486 aa).

ATP-binding positions include Gly-105, 171–172 (RG), and 196–199 (GDGT). Asp-197 provides a ligand contact to Mg(2+). Residues 225–227 (TID), 270–272 (MGR), Glu-323, and 378–381 (YMIR) each bind substrate. Asp-227 serves as the catalytic Proton acceptor. Residues 484–486 (SKV) carry the Peroxisomal targeting signal motif.

The protein belongs to the phosphofructokinase type A (PFKA) family. PPi-dependent PFK group II subfamily. Atypical ATP-dependent clade 'X' sub-subfamily. In terms of assembly, homotetramer. Mg(2+) serves as cofactor.

The protein localises to the glycosome. It carries out the reaction beta-D-fructose 6-phosphate + ATP = beta-D-fructose 1,6-bisphosphate + ADP + H(+). It functions in the pathway carbohydrate degradation; glycolysis; D-glyceraldehyde 3-phosphate and glycerone phosphate from D-glucose: step 3/4. With respect to regulation, allosterically activated by AMP. Its function is as follows. Catalyzes the phosphorylation of D-fructose 6-phosphate to fructose 1,6-bisphosphate by ATP, the first committing step of glycolysis. In Leishmania donovani, this protein is ATP-dependent 6-phosphofructokinase.